The following is an 87-amino-acid chain: Large ribosomal subunit protein bL27 (87 aa).

The interval 1 to 25 (MAHKKGASSSRNGRDSNAQRLGVKR) is disordered. The segment covering 7-19 (ASSSRNGRDSNAQ) has biased composition (polar residues).

This sequence belongs to the bacterial ribosomal protein bL27 family.

The sequence is that of Large ribosomal subunit protein bL27 from Rhodococcus opacus (strain B4).